Reading from the N-terminus, the 261-residue chain is Cytochrome c oxidase subunit 3 (261 aa).

Residues 1–15 (MTHQTHAYHMVNPSP) lie on the Mitochondrial matrix side of the membrane. A helical transmembrane segment spans residues 16-34 (WPLTGALSALLMTSGLAMW). Residues 35–40 (FHYNSM) lie on the Mitochondrial intermembrane side of the membrane. Residues 41–66 (LLLTLGLMTNLLTMYQWWRDIVREST) form a helical membrane-spanning segment. The Mitochondrial matrix portion of the chain corresponds to 67-72 (FQGHHT). A helical transmembrane segment spans residues 73 to 105 (LVVQKGLRYGMILFIISEVFFFSGFFWAFYHSS). Residues 106–128 (LAPTPELGGCWPPTGIHPLNPME) are Mitochondrial intermembrane-facing. The helical transmembrane segment at 129–152 (VPLLNTSVLLASGVSITWAHHSLM) threads the bilayer. At 153–155 (EGN) the chain is on the mitochondrial matrix side. Residues 156–183 (RKHMLQALFITISLGVYFTLLQASEYYE) traverse the membrane as a helical segment. At 184–190 (APFTISD) the chain is on the mitochondrial intermembrane side. Residues 191 to 223 (GIYGSTFFVATGFHGLHVIIGSTFLIVCFLRQL) form a helical membrane-spanning segment. The Mitochondrial matrix portion of the chain corresponds to 224-232 (KFHFTSNHH). A helical membrane pass occupies residues 233 to 256 (FGFEAAAWYWHFVDVVWLFLYVSI). Over 257–261 (YWWGS) the chain is Mitochondrial intermembrane.

Belongs to the cytochrome c oxidase subunit 3 family. As to quaternary structure, component of the cytochrome c oxidase (complex IV, CIV), a multisubunit enzyme composed of 14 subunits. The complex is composed of a catalytic core of 3 subunits MT-CO1, MT-CO2 and MT-CO3, encoded in the mitochondrial DNA, and 11 supernumerary subunits COX4I, COX5A, COX5B, COX6A, COX6B, COX6C, COX7A, COX7B, COX7C, COX8 and NDUFA4, which are encoded in the nuclear genome. The complex exists as a monomer or a dimer and forms supercomplexes (SCs) in the inner mitochondrial membrane with NADH-ubiquinone oxidoreductase (complex I, CI) and ubiquinol-cytochrome c oxidoreductase (cytochrome b-c1 complex, complex III, CIII), resulting in different assemblies (supercomplex SCI(1)III(2)IV(1) and megacomplex MCI(2)III(2)IV(2)).

It is found in the mitochondrion inner membrane. It carries out the reaction 4 Fe(II)-[cytochrome c] + O2 + 8 H(+)(in) = 4 Fe(III)-[cytochrome c] + 2 H2O + 4 H(+)(out). In terms of biological role, component of the cytochrome c oxidase, the last enzyme in the mitochondrial electron transport chain which drives oxidative phosphorylation. The respiratory chain contains 3 multisubunit complexes succinate dehydrogenase (complex II, CII), ubiquinol-cytochrome c oxidoreductase (cytochrome b-c1 complex, complex III, CIII) and cytochrome c oxidase (complex IV, CIV), that cooperate to transfer electrons derived from NADH and succinate to molecular oxygen, creating an electrochemical gradient over the inner membrane that drives transmembrane transport and the ATP synthase. Cytochrome c oxidase is the component of the respiratory chain that catalyzes the reduction of oxygen to water. Electrons originating from reduced cytochrome c in the intermembrane space (IMS) are transferred via the dinuclear copper A center (CU(A)) of subunit 2 and heme A of subunit 1 to the active site in subunit 1, a binuclear center (BNC) formed by heme A3 and copper B (CU(B)). The BNC reduces molecular oxygen to 2 water molecules using 4 electrons from cytochrome c in the IMS and 4 protons from the mitochondrial matrix. The sequence is that of Cytochrome c oxidase subunit 3 (MT-CO3) from Ceratotherium simum (White rhinoceros).